We begin with the raw amino-acid sequence, 322 residues long: Dioxygenase himG (322 aa).

His148 and His229 together coordinate Fe cation.

This sequence belongs to the PhyH family. As to quaternary structure, homodimer. The cofactor is Fe cation.

It participates in secondary metabolite biosynthesis. Functionally, polyketide synthase-nonribosomal peptide synthetase; part of the him gene cluster that mediates the biosynthesis of himeic acid A, a ubiquitin-activating enzyme (E1) inhibitor. First, himA, together with the trans-enoyl reductase himH, catalyzes the formation of apolyketide chain, which is then condensed with leucine by the NRPS activity of himA. Dieckmann cyclization and release from himA gives a tetramic acid intermediate as the product of himA PKS-NRPS. HimG then catalyzes alpha-oxidation of the tetramic acid ring, with a subsequent rearrangement to yield apyrone intermediate. Two terminal methyl groups of polyketide and amide side chains are oxidized to carboxylic acids by himC cytochrome P450 monooxygenase to form himeic acid A. Himeic acid A is further converted to himeic acid B and C during culture growth. No gene responsible for pyrone to pyridone conversion was found in the him gene cluster and himeic acid A is non-enzymatically converted to himeic acid C by the incorporation of an ammonium nitrogen atom in a pH5 buffer, and to himeic acid B at a conversion ratio of 50% during incubation in MeOH for 5 days. This chain is Dioxygenase himG, found in Aspergillus japonicus.